A 142-amino-acid chain; its full sequence is MAVRMTVILPLAMALICLMQAEPATAANNHIRTVLKLFRTIDLDDSKKSFYLTAAKYGIQTQLREPIIRIVGGYLPSTKLSEACVKNMISEVYEIEGDFYSKFSYACEDHAPYSVECLEDARDDYLTQLVELFKETKKCLRE.

The signal sequence occupies residues 1-26; sequence MAVRMTVILPLAMALICLMQAEPATA. 2 disulfides stabilise this stretch: Cys84-Cys139 and Cys107-Cys117.

In terms of assembly, associates with activated host C3-convertase complex C3bBb (C3-CFB). Interacts with host properdin (CFP), a regulator of the alternate pathway of complement. As to expression, female salivary gland (at protein level).

The protein resides in the secreted. Functionally, salivary protein that potently inhibits the alternative pathway of complement system activation in the host while having no inhibitory effect on the classical or lectin pathways. Binds and stabilizes activated host C3-convertase complex C3bBb (C3-CFB) and inhibits its convertase activity. Enhances accumulation of C3bBb on immobilized properdin. This is gSG7 salivary protein from Anopheles albimanus (New world malaria mosquito).